Here is a 554-residue protein sequence, read N- to C-terminus: Intraflagellar transport protein 56 (554 aa).

The disordered stretch occupies residues 1 to 27 (MMLSRAKPAVGGESPHTDKRKKKGRKI). The span at 18 to 27 (DKRKKKGRKI) shows a compositional bias: basic residues. 4 TPR repeats span residues 57-90 (DDTNLWIGYCAFHLGDYKRALEEYENATKEENCN), 92-125 (EVWVNLACTYFFLGMYKQAEAAGFKAPKSRLQNR), 151-184 (KEDQLSLASIHYMRSHYQEAIDIYKRILLDNREY), and 468-501 (ANDCYKMGQFYYSAKAFDVLERLDPNPEYWEGKR).

It belongs to the IFT56 family. Component of the IFT complex B. Interacts with IFT46; the interaction is direct. In terms of tissue distribution, high expression detected in testis. Detected also retina, kidney, lung and brain tissue. The expression level is low in spleen. Expressed in the developing liver. Present in the airway epithelial cells and the testes (at protein level).

It localises to the cell projection. The protein localises to the cilium. Functionally, component of the intraflagellar transport (IFT) complex B required for transport of proteins in the motile cilium. Required for transport of specific ciliary cargo proteins related to motility, while it is neither required for IFT complex B assembly or motion nor for cilium assembly. Required for efficient coupling between the accumulation of GLI2 and GLI3 at the ciliary tips and their dissociation from the negative regulator SUFU. Plays a key role in maintaining the integrity of the IFT complex B and the proper ciliary localization of the IFT complex B components. Not required for IFT complex A ciliary localization or function. Essential for maintaining proper microtubule organization within the ciliary axoneme. This Mus musculus (Mouse) protein is Intraflagellar transport protein 56.